Consider the following 218-residue polypeptide: UPF0711 protein C18orf21 homolog (218 aa).

S126 is subject to Phosphoserine. The span at 130–146 shows a compositional bias: low complexity; sequence ASAASKASPKTPKRAAA. The tract at residues 130 to 192 is disordered; sequence ASAASKASPK…NGSKRKKHFS (63 aa). The residue at position 140 (T140) is a Phosphothreonine. Positions 147–156 are enriched in polar residues; that stretch reads GSTNISQSVH. A compositionally biased stretch (low complexity) spans 161 to 172; the sequence is RSPSSTVRTPTS. Over residues 173–183 the composition is skewed to polar residues; sequence GQSTPICSSRN.

Belongs to the UPF0711 family.

The protein is UPF0711 protein C18orf21 homolog of Rattus norvegicus (Rat).